The chain runs to 336 residues: Holliday junction branch migration complex subunit RuvB (336 aa).

The tract at residues 4–184 (SDRLISSQSI…FGIVQRLEYY (181 aa)) is large ATPase domain (RuvB-L). ATP is bound by residues I23, R24, G65, K68, T69, T70, 131-133 (EDY), R174, Y184, and R221. A Mg(2+)-binding site is contributed by T69. Positions 185 to 255 (SVDSLTKIVA…MAQQALEMLE (71 aa)) are small ATPAse domain (RuvB-S). Residues 258–336 (QHGFDLMDRK…HFGFSAIEQE (79 aa)) are head domain (RuvB-H). 2 residues coordinate DNA: R313 and R318.

It belongs to the RuvB family. As to quaternary structure, homohexamer. Forms an RuvA(8)-RuvB(12)-Holliday junction (HJ) complex. HJ DNA is sandwiched between 2 RuvA tetramers; dsDNA enters through RuvA and exits via RuvB. An RuvB hexamer assembles on each DNA strand where it exits the tetramer. Each RuvB hexamer is contacted by two RuvA subunits (via domain III) on 2 adjacent RuvB subunits; this complex drives branch migration. In the full resolvosome a probable DNA-RuvA(4)-RuvB(12)-RuvC(2) complex forms which resolves the HJ.

It localises to the cytoplasm. The enzyme catalyses ATP + H2O = ADP + phosphate + H(+). Its function is as follows. The RuvA-RuvB-RuvC complex processes Holliday junction (HJ) DNA during genetic recombination and DNA repair, while the RuvA-RuvB complex plays an important role in the rescue of blocked DNA replication forks via replication fork reversal (RFR). RuvA specifically binds to HJ cruciform DNA, conferring on it an open structure. The RuvB hexamer acts as an ATP-dependent pump, pulling dsDNA into and through the RuvAB complex. RuvB forms 2 homohexamers on either side of HJ DNA bound by 1 or 2 RuvA tetramers; 4 subunits per hexamer contact DNA at a time. Coordinated motions by a converter formed by DNA-disengaged RuvB subunits stimulates ATP hydrolysis and nucleotide exchange. Immobilization of the converter enables RuvB to convert the ATP-contained energy into a lever motion, pulling 2 nucleotides of DNA out of the RuvA tetramer per ATP hydrolyzed, thus driving DNA branch migration. The RuvB motors rotate together with the DNA substrate, which together with the progressing nucleotide cycle form the mechanistic basis for DNA recombination by continuous HJ branch migration. Branch migration allows RuvC to scan DNA until it finds its consensus sequence, where it cleaves and resolves cruciform DNA. In Legionella pneumophila (strain Paris), this protein is Holliday junction branch migration complex subunit RuvB.